Here is a 294-residue protein sequence, read N- to C-terminus: 4-hydroxy-tetrahydrodipicolinate synthase (294 aa).

Thr-47 lines the pyruvate pocket. Catalysis depends on Tyr-135, which acts as the Proton donor/acceptor. The Schiff-base intermediate with substrate role is filled by Lys-163. Ile-206 is a binding site for pyruvate.

It belongs to the DapA family. In terms of assembly, homodimer.

The protein localises to the cytoplasm. It carries out the reaction L-aspartate 4-semialdehyde + pyruvate = (2S,4S)-4-hydroxy-2,3,4,5-tetrahydrodipicolinate + H2O + H(+). It functions in the pathway amino-acid biosynthesis; L-lysine biosynthesis via DAP pathway; (S)-tetrahydrodipicolinate from L-aspartate: step 3/4. Catalyzes the condensation of (S)-aspartate-beta-semialdehyde [(S)-ASA] and pyruvate to 4-hydroxy-tetrahydrodipicolinate (HTPA). This Staphylococcus epidermidis (strain ATCC 35984 / DSM 28319 / BCRC 17069 / CCUG 31568 / BM 3577 / RP62A) protein is 4-hydroxy-tetrahydrodipicolinate synthase.